We begin with the raw amino-acid sequence, 244 residues long: 5-oxoprolinase subunit A (244 aa).

Belongs to the LamB/PxpA family. Forms a complex composed of PxpA, PxpB and PxpC.

The enzyme catalyses 5-oxo-L-proline + ATP + 2 H2O = L-glutamate + ADP + phosphate + H(+). Functionally, catalyzes the cleavage of 5-oxoproline to form L-glutamate coupled to the hydrolysis of ATP to ADP and inorganic phosphate. The protein is 5-oxoprolinase subunit A of Salmonella typhi.